We begin with the raw amino-acid sequence, 400 residues long: NADPH dehydrogenase 2 (400 aa).

FMN is bound by residues threonine 38 and glutamine 115. Residues histidine 192 and asparagine 195 each coordinate substrate. Tyrosine 197 functions as the Proton donor in the catalytic mechanism. The FMN site is built by arginine 244 and arginine 349. Serine 353 carries the phosphoserine modification. Tyrosine 376 serves as a coordination point for substrate. The residue at position 379 (serine 379) is a Phosphoserine.

The protein belongs to the NADH:flavin oxidoreductase/NADH oxidase family. As to quaternary structure, homodimer or heterodimer with OYE3. It depends on FMN as a cofactor.

It is found in the cytoplasm. It localises to the nucleus. The protein resides in the mitochondrion. It carries out the reaction A + NADPH + H(+) = AH2 + NADP(+). Its function is as follows. Flavin-dependent enoate reductase that catalyzes the chemo- and stereoslective hydrogenation of electron-poor alkenes. The enzyme is reduced by NADPH, and oxygen, quinones, and alpha,beta-unsaturated aldehydes and ketones can act as electron acceptors to complete catalytic turnover. The physiological oxidant remains elusive. Has an antioxidant activity, reducing reactive oxygen species (ROS) levels when overexpressed. Formation of OYE2-OYE3 heterodimers contribute to the induction of programmed cell death upon oxidative stress. This Saccharomyces cerevisiae (strain ATCC 204508 / S288c) (Baker's yeast) protein is NADPH dehydrogenase 2.